The chain runs to 251 residues: CDP-diacylglycerol pyrophosphatase (251 aa).

A helical transmembrane segment spans residues 4 to 24 (AGLLFLVMIVIAVVAAGIGYW).

This sequence belongs to the Cdh family.

The protein resides in the cell inner membrane. It catalyses the reaction a CDP-1,2-diacyl-sn-glycerol + H2O = a 1,2-diacyl-sn-glycero-3-phosphate + CMP + 2 H(+). The protein operates within phospholipid metabolism; CDP-diacylglycerol degradation; phosphatidate from CDP-diacylglycerol: step 1/1. The polypeptide is CDP-diacylglycerol pyrophosphatase (Shigella flexneri).